The primary structure comprises 1142 residues: Melanoma-associated antigen C1 (1142 aa).

The segment at 1-132 is disordered; that stretch reads MGDKDMPTAG…DVQSPLQNPA (132 aa). Residues 13 to 42 show a composition bias toward low complexity; that stretch reads SLLQSSSESPQSCPEGEDSQSPLQIPQSSP. Serine 63 carries the phosphoserine modification. The span at 76 to 87 shows a compositional bias: low complexity; the sequence is SQSPLQIPQSSP. The span at 92-103 shows a compositional bias: polar residues; the sequence is TQSPLQNSQSSP. Residues serine 207 and serine 382 each carry the phosphoserine modification. Disordered stretches follow at residues 502–778 and 791–893; these read TQST…LQRP and LQSS…SLTD. The span at 614–626 shows a compositional bias: polar residues; it reads SPLQGEEFQSSLQ. A compositionally biased stretch (low complexity) spans 627-659; it reads SPVSICSSSTPSSLPQSFPESSQSPPEGPVQSP. Positions 671-680 are enriched in polar residues; it reads HSQSPLQSPE. Composition is skewed to low complexity over residues 741 to 762 and 807 to 889; these read QSPV…FPES and QSPL…LESD. Residues 908–1106 enclose the MAGE domain; sequence LDEKVDELAR…ITFPSSYKDA (199 aa). A Phosphoserine modification is found at serine 1063. The segment at 1118 to 1142 is disordered; it reads IDTTDDSTATESASSSVMSPSFSSE. Low complexity predominate over residues 1123–1142; sequence DSTATESASSSVMSPSFSSE.

Expressed in testis and in tumors of a wide variety of histologic types.

It is found in the cytoplasm. In Homo sapiens (Human), this protein is Melanoma-associated antigen C1 (MAGEC1).